The primary structure comprises 794 residues: Protocadherin beta-6 (794 aa).

An N-terminal signal peptide occupies residues 1–27; that stretch reads MMQTKVQNKKRQVAFFILLMLWGEVGS. The Extracellular portion of the chain corresponds to 28–688; that stretch reads ESIQYSVLEE…AQADLLTVYL (661 aa). 5 Cadherin domains span residues 34–132, 137–241, 246–345, 350–449, and 454–559; these read VLEE…APEF, MLLK…VPEF, YEAQ…APEL, FISP…APAF, and YTLF…SPFV. An N-linked (GlcNAc...) asparagine glycan is attached at Asn-46. A disulfide bridge links Cys-95 with Cys-101. An N-linked (GlcNAc...) asparagine glycan is attached at Asn-183. Asn-416 carries an N-linked (GlcNAc...) asparagine glycan. Asn-565 carries an N-linked (GlcNAc...) asparagine glycan. The Cadherin 6 domain occupies 566–669; the sequence is GSAPCTELVP…LVDGFSQPYL (104 aa). Residues 689–709 traverse the membrane as a helical segment; that stretch reads VVALASVSSLFLFSVLLFVAV. At 710 to 794 the chain is on the cytoplasmic side; the sequence is RLCRRSRAAS…PTSRNSFPFS (85 aa). A disordered region spans residues 773–794; it reads PPQGTEREMEETPTSRNSFPFS. Positions 784-794 are enriched in polar residues; that stretch reads TPTSRNSFPFS.

As to quaternary structure, forms homodimers in trans (molecules expressed by two different cells). Forms promiscuous heterodimers in cis (at the plasma membrane of the same cell) with other protocadherins.

The protein localises to the cell membrane. Calcium-dependent cell-adhesion protein involved in cells self-recognition and non-self discrimination. Thereby, it is involved in the establishment and maintenance of specific neuronal connections in the brain. The chain is Protocadherin beta-6 from Pan troglodytes (Chimpanzee).